We begin with the raw amino-acid sequence, 612 residues long: Putative pentatricopeptide repeat-containing protein At5g40405 (612 aa).

PPR repeat units follow at residues Thr-70–Leu-104, Asp-107–Asn-141, Asp-142–Pro-172, Asp-173–Arg-203, Asp-204–Val-238, Asn-239–Ile-273, Thr-274–Lys-304, Asn-305–Pro-339, Asn-340–Pro-375, and Gln-376–Ala-410. The tract at residues Val-411–Asn-486 is type E motif. The interval Gly-487–Arg-517 is type E(+) motif. Positions Leu-518 to Trp-612 are type DYW motif.

The protein belongs to the PPR family. PCMP-H subfamily.

This Arabidopsis thaliana (Mouse-ear cress) protein is Putative pentatricopeptide repeat-containing protein At5g40405 (PCMP-H14).